The primary structure comprises 78 residues: RRINNDCQNFIGNRAMYEKVDWICKDCANIFRQDGLLNNCRSNCFYNTEFLWCIDATENTRNKEQLEQWAAILGAGWN.

Cystine bridges form between cysteine 7–cysteine 44, cysteine 24–cysteine 40, and cysteine 27–cysteine 53.

Belongs to the arthropod CHH/MIH/GIH/VIH hormone family. In terms of tissue distribution, produced by the medulla terminalis X-organ in the eyestalks and transported to the sinus gland where it is stored and released.

The protein localises to the secreted. Its function is as follows. Represses the synthesis of methyl farnesoate, the precursor of insect juvenile hormone III in the mandibular organ. The chain is Mandibular organ-inhibiting hormone 2 from Cancer pagurus (Rock crab).